The following is a 436-amino-acid chain: Trigger factor (436 aa).

Positions 164 to 249 (GDTVVIDFEG…IHEVKTKELP (86 aa)) constitute a PPIase FKBP-type domain.

This sequence belongs to the FKBP-type PPIase family. Tig subfamily.

It localises to the cytoplasm. It carries out the reaction [protein]-peptidylproline (omega=180) = [protein]-peptidylproline (omega=0). Its function is as follows. Involved in protein export. Acts as a chaperone by maintaining the newly synthesized protein in an open conformation. Functions as a peptidyl-prolyl cis-trans isomerase. This chain is Trigger factor, found in Ligilactobacillus salivarius (strain UCC118) (Lactobacillus salivarius).